We begin with the raw amino-acid sequence, 228 residues long: Putative NAC domain-containing protein 61 (228 aa).

Residues 5–156 (LSVGFRFYPT…KSGSSRAFDR (152 aa)) form the NAC domain. Disordered regions lie at residues 77 to 96 (ARGGRPSRTTGSGYWKATGS) and 166 to 197 (RNLPSNGVETSSRATISTSPETSHSGGNQVDL). The span at 80–89 (GRPSRTTGSG) shows a compositional bias: low complexity. Positions 168-193 (LPSNGVETSSRATISTSPETSHSGGN) are enriched in polar residues.

Its subcellular location is the nucleus. The sequence is that of Putative NAC domain-containing protein 61 (NAC061) from Arabidopsis thaliana (Mouse-ear cress).